Reading from the N-terminus, the 344-residue chain is UDP-N-acetylglucosamine transporter UGNT1 (344 aa).

A disordered region spans residues methionine 1–lysine 23. The next 9 helical transmembrane spans lie at tyrosine 41–leucine 61, phenylalanine 66–alanine 86, isoleucine 92–valine 112, threonine 114–alanine 134, tyrosine 167–alanine 187, phenylalanine 194–isoleucine 214, phenylalanine 226–isoleucine 246, phenylalanine 264–leucine 284, and phenylalanine 304–isoleucine 324.

It belongs to the TPT transporter family. UGnT (TC 2.A.7.15) subfamily. In terms of tissue distribution, expressed in roots, leaves, stems, flowers and siliques.

It is found in the golgi apparatus membrane. Mediates the transport of UDP-N-acetylglucosamine (UDP-GlcNAc) across the Golgi apparatus membrane. Delivers an essential substrate for the maturation of N-glycans and the GlcNAc-containing glycosyl inositol phosphorylceramide (GIPC) class of sphingolipids in the Golgi apparatus. This Arabidopsis thaliana (Mouse-ear cress) protein is UDP-N-acetylglucosamine transporter UGNT1.